Reading from the N-terminus, the 317-residue chain is Melanocyte-stimulating hormone receptor (317 aa).

Over methionine 1–glutamate 37 the chain is Extracellular. Asparagine 29 carries an N-linked (GlcNAc...) asparagine glycan. The chain crosses the membrane as a helical span at residues valine 38–isoleucine 63. Residues alanine 64–proline 72 are Cytoplasmic-facing. A helical transmembrane segment spans residues methionine 73–leucine 93. The Extracellular portion of the chain corresponds to aspartate 94 to asparagine 118. Residues valine 119–valine 140 form a helical membrane-spanning segment. Over aspartate 141–arginine 163 the chain is Cytoplasmic. A helical membrane pass occupies residues valine 164–cysteine 183. Over aspartate 184–cysteine 191 the chain is Extracellular. The helical transmembrane segment at leucine 192 to leucine 211 threads the bilayer. The Cytoplasmic portion of the chain corresponds to alanine 212 to alanine 240. The chain crosses the membrane as a helical span at residues alanine 241 to leucine 266. At cysteine 267–asparagine 279 the chain is on the extracellular side. Residues phenylalanine 280–phenylalanine 300 traverse the membrane as a helical segment. Over arginine 301 to tryptophan 317 the chain is Cytoplasmic. Cysteine 315 carries the S-palmitoyl cysteine lipid modification.

Belongs to the G-protein coupled receptor 1 family. Interacts with MGRN1, but does not undergo MGRN1-mediated ubiquitination; this interaction competes with GNAS-binding and thus inhibits agonist-induced cAMP production. Interacts with OPN3; the interaction results in a decrease in MC1R-mediated cAMP signaling and ultimately a decrease in melanin production in melanocytes.

The protein localises to the cell membrane. Receptor for MSH (alpha, beta and gamma) and ACTH. The activity of this receptor is mediated by G proteins which activate adenylate cyclase. Mediates melanogenesis, the production of eumelanin (black/brown) and phaeomelanin (red/yellow), via regulation of cAMP signaling in melanocytes. This is Melanocyte-stimulating hormone receptor (MC1R) from Trachypithecus francoisi (Francois' leaf monkey).